Reading from the N-terminus, the 736-residue chain is Exo-oligoalginate lyase (736 aa).

The signal sequence occupies residues 1–23 (MLSVNTIKNTLLAAVLVSVPATA). Residues lysine 136, 146-149 (QSLN), lysine 198, histidine 202, and 257-260 (YYQR) contribute to the substrate site. Tyrosine 258 (proton donor) is an active-site residue. Histidine 413 functions as the Proton acceptor in the catalytic mechanism. Zn(2+) is bound by residues histidine 415 and aspartate 433. Arginine 438 contacts substrate. Histidine 464 serves as a coordination point for Zn(2+). A substrate-binding site is contributed by glutamate 667.

This sequence belongs to the polysaccharide lyase 17 family. Homodimer. The cofactor is Zn(2+).

It localises to the periplasm. The enzyme catalyses Cleavage of 4-deoxy-alpha-L-erythro-hex-4-enopyranuronoside oligosaccharides into 4-deoxy-alpha-L-erythro-hex-4-enopyranuronate monosaccharides.. Its function is as follows. Catalyzes the depolymerization of alginate through an exolytic mode of action, via a beta-elimination mechanism. Preferentially acts on oligoalginates with degrees of polymerization higher than 2 to produce the alginate monomer, 4-deoxy-L-erythro-5-hexoseulose uronic acid. This is Exo-oligoalginate lyase from Saccharophagus degradans (strain 2-40 / ATCC 43961 / DSM 17024).